The sequence spans 494 residues: Alpha-amylase-related protein (494 aa).

The signal sequence occupies residues 1 to 20; it reads MFKFALALTLCLAGASLSLA. Glutamine 21 is modified (pyrrolidone carboxylic acid). Cysteine 48 and cysteine 104 are joined by a disulfide. Asparagine 118, glutamine 169, and aspartate 178 together coordinate Ca(2+). Cysteine 157 and cysteine 171 are disulfide-bonded. Arginine 206 lines the chloride pocket. Aspartate 208 acts as the Nucleophile in catalysis. Residue histidine 212 coordinates Ca(2+). Residue glutamate 245 is the Proton donor of the active site. Residues asparagine 308 and arginine 343 each coordinate chloride. 3 cysteine pairs are disulfide-bonded: cysteine 376/cysteine 382, cysteine 418/cysteine 441, and cysteine 448/cysteine 460.

Belongs to the glycosyl hydrolase 13 family. In terms of assembly, monomer. The cofactor is Ca(2+). Chloride serves as cofactor.

Its subcellular location is the secreted. The catalysed reaction is Endohydrolysis of (1-&gt;4)-alpha-D-glucosidic linkages in polysaccharides containing three or more (1-&gt;4)-alpha-linked D-glucose units.. The sequence is that of Alpha-amylase-related protein (Amyrel) from Drosophila punjabiensis (Fruit fly).